A 698-amino-acid chain; its full sequence is ATP-dependent RNA helicase DHX33 (698 aa).

Disordered stretches follow at residues 1 to 20 and 29 to 50; these read MPEE…SCPP and TAGG…AQPS. The tract at residues 1–71 is required for nucleolar location; the sequence is MPEEASLPPA…RRSLPIFRAR (71 aa). Gly residues predominate over residues 30 to 40; it reads AGGGGGAGGGR. Residues 75 to 243 form the Helicase ATP-binding domain; it reads LAQLRNLDNA…FNRAPVLYLE (169 aa). An ATP-binding site is contributed by 88–95; that stretch reads GETGSGKT. A DEAH box motif is present at residues 185–188; sequence DEAH. The 171-residue stretch at 271-441 folds into the Helicase C-terminal domain; it reads QIHQEAPASQ…SVILQLLAMK (171 aa). The HA2; required for interaction with EIF3G and RPL26 stretch occupies residues 462 to 553; that stretch reads AIAQLDLLGA…ISSEGDHITL (92 aa). The Critical for rDNA-binding signature appears at 536–550; it reads VQSVRKKFISSEGDH.

This sequence belongs to the DEAD box helicase family. DEAH subfamily. As to quaternary structure, interacts with UBTF. Interacts with DDX3X, EIF3G and EIF3H; the interaction is independent of RNA. Interacts (via HA2 region and Helicase C-terminal domain) with the components of the large ribosomal subunit RPL3, RPL7, RPL26 and RPL27. Binds to mRNA. Interacts (via the helicase C-terminal domain) with MAVS. Binds to double-stranded RNA (via the helicase C-terminal domain). Post-translationally, ubiquitinated, leading to its degradation by the proteasome. Deubiquitinated by USP36.

The protein resides in the nucleus. It is found in the nucleolus. Its subcellular location is the nucleoplasm. It localises to the cytoplasm. The protein localises to the inflammasome. The enzyme catalyses ATP + H2O = ADP + phosphate + H(+). Functionally, implicated in nucleolar organization, ribosome biogenesis, protein synthesis and cytoplasmic dsRNA sensing. Stimulates RNA polymerase I transcription of the 47S precursor rRNA. Associates with ribosomal DNA (rDNA) loci where it is involved in POLR1A recruitment. In the cytoplasm, promotes elongation-competent 80S ribosome assembly at the late stage of mRNA translation initiation. Senses cytosolic dsRNA mediating NLRP3 inflammasome formation in macrophages and type I interferon production in myeloid dendritic cells. Required for NLRP3 activation induced by viral dsRNA and bacterial RNA. In dendritic cells, required for induction of type I interferon production induced by cytoplasmic dsRNA via the activation of MAPK and NF-kappa-B signaling pathways. This is ATP-dependent RNA helicase DHX33 from Mus musculus (Mouse).